The sequence spans 996 residues: Conserved oligomeric Golgi complex subunit 7 (996 aa).

Disordered stretches follow at residues 533-571 (TPSS…NSVG), 828-867 (QQQE…DEDD), and 950-974 (QLHN…NTNN). Residues 557–571 (RSGSGSGNSNSNSVG) show a composition bias toward low complexity. Residues 828 to 844 (QQQEQQEKEQQQEKEQQ) show a composition bias toward basic and acidic residues. 2 stretches are compositionally biased toward low complexity: residues 849 to 858 (DININTNNNN) and 953 to 974 (NNNN…NTNN).

Belongs to the COG7 family. As to quaternary structure, component of the conserved oligomeric Golgi complex which is composed of eight different subunits and is required for normal Golgi morphology and localization.

Its subcellular location is the golgi apparatus membrane. Required for normal Golgi function. This chain is Conserved oligomeric Golgi complex subunit 7 (cog7), found in Dictyostelium discoideum (Social amoeba).